Reading from the N-terminus, the 403-residue chain is Chromatin structure-remodeling complex subunit SFH1 (403 aa).

A disordered region spans residues 58–115; it reads FPTFDIDSDSNDEEQSSASAGNDDPQANANGGEAAGVNGQGSGDGGSANTGAGRHGKS. A compositionally biased stretch (acidic residues) spans 63–72; the sequence is IDSDSNDEEQ. Over residues 84-94 the composition is skewed to low complexity; the sequence is ANANGGEAAGV. The segment covering 95 to 105 has biased composition (gly residues); sequence NGQGSGDGGSA.

The protein belongs to the SNF5 family.

It is found in the nucleus. In terms of biological role, part of the chromatin structure-remodeling complex (RSC) which is involved in transcription regulation and nucleosome positioning. RSC is responsible for the transfer of a histone octamer from a nucleosome core particle to naked DNA. The reaction requires ATP and involves an activated RSC-nucleosome intermediate. Remodeling reaction also involves DNA translocation, DNA twist and conformational change. As a reconfigurer of centromeric and flanking nucleosomes, RSC complex is required both for proper kinetochore function in chromosome segregation and, via a PKC1-dependent signaling pathway, for organization of the cellular cytoskeleton. This subunit is essential for mitotic growth and required for cell cycle progression. This is Chromatin structure-remodeling complex subunit SFH1 (SFH1) from Candida glabrata (strain ATCC 2001 / BCRC 20586 / JCM 3761 / NBRC 0622 / NRRL Y-65 / CBS 138) (Yeast).